Here is a 433-residue protein sequence, read N- to C-terminus: Ribosomal protein uS12 methylthiotransferase RimO (433 aa).

The 116-residue stretch at 9-124 (NKINVITLGC…LLKALGADYR (116 aa)) folds into the MTTase N-terminal domain. Residues cysteine 18, cysteine 53, cysteine 87, cysteine 148, cysteine 152, and cysteine 155 each contribute to the [4Fe-4S] cluster site. A Radical SAM core domain is found at 134 to 364 (TTPKNYAYLK…MDLQSQISWD (231 aa)). A TRAM domain is found at 367-433 (QEKLGQTFRC…TEFDLYGEPA (67 aa)).

This sequence belongs to the methylthiotransferase family. RimO subfamily. It depends on [4Fe-4S] cluster as a cofactor.

The protein localises to the cytoplasm. It catalyses the reaction L-aspartate(89)-[ribosomal protein uS12]-hydrogen + (sulfur carrier)-SH + AH2 + 2 S-adenosyl-L-methionine = 3-methylsulfanyl-L-aspartate(89)-[ribosomal protein uS12]-hydrogen + (sulfur carrier)-H + 5'-deoxyadenosine + L-methionine + A + S-adenosyl-L-homocysteine + 2 H(+). Functionally, catalyzes the methylthiolation of an aspartic acid residue of ribosomal protein uS12. The polypeptide is Ribosomal protein uS12 methylthiotransferase RimO (Flavobacterium psychrophilum (strain ATCC 49511 / DSM 21280 / CIP 103535 / JIP02/86)).